The sequence spans 270 residues: F-actin-capping protein subunit beta (270 aa).

The segment covering 245–258 (QTRSQKSTTDSQEQ) has biased composition (polar residues). The tract at residues 245–270 (QTRSQKSTTDSQEQQQKEVIKGLQNL) is disordered.

Belongs to the F-actin-capping protein beta subunit family. Component of the F-actin capping complex, composed of a heterodimer of an alpha and a beta subunit.

The protein resides in the cytoplasm. It localises to the cytoskeleton. Its subcellular location is the actin patch. In terms of biological role, F-actin-capping proteins bind in a Ca(2+)-independent manner to the fast growing ends of actin filaments (barbed end) thereby blocking the exchange of subunits at these ends. Unlike other capping proteins (such as gelsolin and severin), these proteins do not sever actin filaments. The polypeptide is F-actin-capping protein subunit beta (CAP2) (Candida glabrata (strain ATCC 2001 / BCRC 20586 / JCM 3761 / NBRC 0622 / NRRL Y-65 / CBS 138) (Yeast)).